The sequence spans 250 residues: CCN family member 5 (250 aa).

Residues 1–23 form the signal peptide; the sequence is MRGSPLIRLLATSFLCLLSMVCA. 6 cysteine pairs are disulfide-bonded: Cys-22-Cys-50, Cys-26-Cys-52, Cys-32-Cys-53, Cys-39-Cys-56, Cys-64-Cys-78, and Cys-70-Cys-100. An IGFBP N-terminal domain is found at 24–103; the sequence is QLCRTPCTCP…DEDDGDCEVN (80 aa). The VWFC domain maps to 98–164; sequence GDCEVNGRRY…GKCCPEWVCD (67 aa). In terms of domain architecture, TSP type-1 spans 194–238; it reads WPNWSTAWGPCSTTCGLGIATRVSNQNRFCQLEIQRRLCLPRPCL. An N-linked (GlcNAc...) asparagine glycan is attached at Asn-196.

Belongs to the CCN family.

It localises to the secreted. May play an important role in modulating bone turnover. Promotes the adhesion of osteoblast cells and inhibits the binding of fibrinogen to integrin receptors. In addition, inhibits osteocalcin production. The chain is CCN family member 5 (Ccn5) from Rattus norvegicus (Rat).